We begin with the raw amino-acid sequence, 217 residues long: ATP phosphoribosyltransferase (217 aa).

Belongs to the ATP phosphoribosyltransferase family. Short subfamily. In terms of assembly, heteromultimer composed of HisG and HisZ subunits.

It is found in the cytoplasm. The enzyme catalyses 1-(5-phospho-beta-D-ribosyl)-ATP + diphosphate = 5-phospho-alpha-D-ribose 1-diphosphate + ATP. It participates in amino-acid biosynthesis; L-histidine biosynthesis; L-histidine from 5-phospho-alpha-D-ribose 1-diphosphate: step 1/9. Functionally, catalyzes the condensation of ATP and 5-phosphoribose 1-diphosphate to form N'-(5'-phosphoribosyl)-ATP (PR-ATP). Has a crucial role in the pathway because the rate of histidine biosynthesis seems to be controlled primarily by regulation of HisG enzymatic activity. The chain is ATP phosphoribosyltransferase from Parasynechococcus marenigrum (strain WH8102).